Reading from the N-terminus, the 265-residue chain is 3-methyl-2-oxobutanoate hydroxymethyltransferase (265 aa).

The Mg(2+) site is built by Asp-45 and Asp-84. 3-methyl-2-oxobutanoate contacts are provided by residues 45–46, Asp-84, and Lys-112; that span reads DS. Glu-114 contacts Mg(2+). Catalysis depends on Glu-182, which acts as the Proton acceptor.

The protein belongs to the PanB family. In terms of assembly, homodecamer; pentamer of dimers. Requires Mg(2+) as cofactor.

It localises to the cytoplasm. The enzyme catalyses 3-methyl-2-oxobutanoate + (6R)-5,10-methylene-5,6,7,8-tetrahydrofolate + H2O = 2-dehydropantoate + (6S)-5,6,7,8-tetrahydrofolate. Its pathway is cofactor biosynthesis; (R)-pantothenate biosynthesis; (R)-pantoate from 3-methyl-2-oxobutanoate: step 1/2. In terms of biological role, catalyzes the reversible reaction in which hydroxymethyl group from 5,10-methylenetetrahydrofolate is transferred onto alpha-ketoisovalerate to form ketopantoate. The chain is 3-methyl-2-oxobutanoate hydroxymethyltransferase from Baumannia cicadellinicola subsp. Homalodisca coagulata.